The sequence spans 361 residues: MATAASNPYSILSSSSLVHADSAGMQQGSPFRNPQKLLQSDYLQGVPSNGHPLGHHWVTSLSDGGPWSSTLATSPLDQQDVKPGREDLQLGAIIHHRSPHVAHHSPHTNHPNAWGASPAPNSSITSSGQPLNVYSQPGFTVSGMLEHGGLTPPPAAASTQSLHPVLREPPDHGELGSHHCQDHSDEETPTSDELEQFAKQFKQRRIKLGFTQADVGLALGTLYGNVFSQTTICRFEALQLSFKNMCKLKPLLNKWLEEADSSTGSPTSIDKIAAQGRKRKKRTSIEVSVKGVLETHFLKCPKPAAQEISSLADSLQLEKEVVRVWFCNRRQKEKRMTPPGDQQPHEVYSHTVKTDASCHDL.

Disordered regions lie at residues 99–131 (PHVAHHSPHTNHPNAWGASPAPNSSITSSGQPL) and 144–192 (MLEH…PTSD). The segment covering 119 to 131 (APNSSITSSGQPL) has biased composition (polar residues). A compositionally biased stretch (basic and acidic residues) spans 165–183 (VLREPPDHGELGSHHCQDH). The region spanning 186-260 (EETPTSDELE…LLNKWLEEAD (75 aa)) is the POU-specific domain. At Ser265 the chain carries Phosphoserine. Residues 278 to 337 (KRKKRTSIEVSVKGVLETHFLKCPKPAAQEISSLADSLQLEKEVVRVWFCNRRQKEKRMT) constitute a DNA-binding region (homeobox). A disordered region spans residues 334–361 (KRMTPPGDQQPHEVYSHTVKTDASCHDL). Residues 343–361 (QPHEVYSHTVKTDASCHDL) are compositionally biased toward basic and acidic residues.

This sequence belongs to the POU transcription factor family. Class-3 subfamily. As to quaternary structure, interacts with HNRNPU. Brain specific.

It is found in the nucleus. Its function is as follows. Probable transcription factor which exert its primary action widely during early neural development and in a very limited set of neurons in the mature brain. This Mus musculus (Mouse) protein is POU domain, class 3, transcription factor 4 (Pou3f4).